The following is a 121-amino-acid chain: MDSNTITSFQDILQRMSKMQLESSSADLNGMITQFERLKIYRDSLGESVMRMGDLHSLQNRNATWRDELSQKFEEIRWLIAECRNILTKTENSFEQITFLQALQLLLEVESEIRTFSFQLI.

2 consecutive short sequence motifs (nuclear export signal) follow at residues 12–21 (ILQRMSKMQL) and 85–94 (NILTKTENSF).

This sequence belongs to the influenza viruses NEP family. As to quaternary structure, interacts with protein M1. May interact with host nucleoporin RAB/HRB and exportin XPO1/CRM1.

It localises to the virion. The protein resides in the host nucleus. Mediates the nuclear export of encapsidated genomic RNAs (ribonucleoproteins, RNPs). Acts as an adapter between viral RNPs complexes and the nuclear export machinery of the cell. Possesses no intrinsic RNA-binding activity, but includes a C-terminal M1-binding domain. This domain is believed to allow recognition of RNPs bound to the protein M1. Since protein M1 is not available in large quantities before late stages of infection, such an indirect recognition mechanism probably ensures that genomic RNPs are not exported from the host nucleus until sufficient quantities of viral mRNA and progeny genomic RNA have been synthesized. Furthermore, the RNPs enter the host cytoplasm only when associated with the M1 protein that is necessary to guide them to the plasma membrane. May down-regulate viral RNA synthesis when overproduced. The protein is Nuclear export protein of Aves (Horse).